A 311-amino-acid polypeptide reads, in one-letter code: RNA polymerase sigma factor SigA4 (311 aa).

The tract at residues 78–148 (MLKANLRLVV…TRAIDNHART (71 aa)) is sigma-70 factor domain-2. The short motif at 102-105 (DLIQ) is the Interaction with polymerase core subunit RpoC element. A sigma-70 factor domain-3 region spans residues 157 to 234 (EKISRIKKMT…DPKSLEPMDA (78 aa)). Positions 247-304 (WLAHLTEREQQVLQLRFGLHDGEQHTLAEIGRRLNVSRERIRQVEARALQKLRVLSQQ) are sigma-70 factor domain-4. A DNA-binding region (H-T-H motif) is located at residues 273–292 (LAEIGRRLNVSRERIRQVEA).

Belongs to the sigma-70 factor family.

The protein localises to the cytoplasm. Its function is as follows. Sigma factors are initiation factors that promote the attachment of RNA polymerase to specific initiation sites and are then released. In Synechococcus elongatus (strain ATCC 33912 / PCC 7942 / FACHB-805) (Anacystis nidulans R2), this protein is RNA polymerase sigma factor SigA4 (sigA4).